The following is a 505-amino-acid chain: ATP synthase subunit alpha (505 aa).

Residue 170-177 (GDRQTGKT) coordinates ATP.

Belongs to the ATPase alpha/beta chains family. F-type ATPases have 2 components, CF(1) - the catalytic core - and CF(0) - the membrane proton channel. CF(1) has five subunits: alpha(3), beta(3), gamma(1), delta(1), epsilon(1). CF(0) has four main subunits: a(1), b(1), b'(1) and c(9-12).

Its subcellular location is the cellular thylakoid membrane. The catalysed reaction is ATP + H2O + 4 H(+)(in) = ADP + phosphate + 5 H(+)(out). Its function is as follows. Produces ATP from ADP in the presence of a proton gradient across the membrane. The alpha chain is a regulatory subunit. In Prochlorococcus marinus (strain SARG / CCMP1375 / SS120), this protein is ATP synthase subunit alpha.